Here is a 270-residue protein sequence, read N- to C-terminus: uncharacterized protein (270 aa).

Basic and acidic residues-rich tracts occupy residues 1–13 (MSEF…KDLY) and 49–73 (EVER…KEEK). Disordered regions lie at residues 1–76 (MSEF…KQEE), 90–111 (STSP…PQTE), and 204–270 (KKRR…FRTE). Residues 90–102 (STSPAQEEQGSST) are compositionally biased toward polar residues. The span at 204–216 (KKRRPGQKQRAAK) shows a compositional bias: basic residues. Residues 218-235 (LALERTKERDTKAREIKK) are compositionally biased toward basic and acidic residues. Residues 236–253 (QLKKKFHKRGGKKNKKKV) are compositionally biased toward basic residues.

This is an uncharacterized protein from Saccharomyces cerevisiae (strain ATCC 204508 / S288c) (Baker's yeast).